A 214-amino-acid chain; its full sequence is YINYKNMSNQHTLLMSNLLPVGSNISTWWNFGSMLLICLMLQTLTGFFLAIHYTANINLAFSSVVHITRDVPYGWTMQNLHAISASLFFICIYIHIARGLYYGLYMNKEVWLSGVTLLFTLMATAFFGYVLPWGQMSFWAATVITNLLTAIPYLGTMLTTWLWGGFSXNDPTLTRFFALHFILPFIIISLSSAHIMLLHAEGSNNPLGTNSDID.

4 helical membrane passes run 31 to 51 (FGSM…FLAI), 75 to 96 (WTMQ…YIHI), 111 to 131 (WLSG…GYVL), and 176 to 196 (FFAL…AHIM). Residues histidine 81 and histidine 95 each coordinate heme b. Positions 180 and 194 each coordinate heme b. Histidine 199 contributes to the a ubiquinone binding site.

This sequence belongs to the cytochrome b family. The cytochrome bc1 complex contains 3 respiratory subunits (MT-CYB, CYC1 and UQCRFS1), 2 core proteins (UQCRC1 and UQCRC2) and probably 6 low-molecular weight proteins. The cofactor is heme b.

The protein resides in the mitochondrion inner membrane. Component of the ubiquinol-cytochrome c reductase complex (complex III or cytochrome b-c1 complex) that is part of the mitochondrial respiratory chain. The b-c1 complex mediates electron transfer from ubiquinol to cytochrome c. Contributes to the generation of a proton gradient across the mitochondrial membrane that is then used for ATP synthesis. In Elapsoidea semiannulata (Angolan garter snake), this protein is Cytochrome b (MT-CYB).